Reading from the N-terminus, the 636-residue chain is 1-deoxy-D-xylulose-5-phosphate synthase (636 aa).

Residues H72 and 113 to 115 (GHA) contribute to the thiamine diphosphate site. D144 contributes to the Mg(2+) binding site. Residues 145–146 (GA), N174, Y287, and E370 each bind thiamine diphosphate. N174 lines the Mg(2+) pocket.

This sequence belongs to the transketolase family. DXPS subfamily. As to quaternary structure, homodimer. Requires Mg(2+) as cofactor. Thiamine diphosphate is required as a cofactor.

The catalysed reaction is D-glyceraldehyde 3-phosphate + pyruvate + H(+) = 1-deoxy-D-xylulose 5-phosphate + CO2. Its pathway is metabolic intermediate biosynthesis; 1-deoxy-D-xylulose 5-phosphate biosynthesis; 1-deoxy-D-xylulose 5-phosphate from D-glyceraldehyde 3-phosphate and pyruvate: step 1/1. Its function is as follows. Catalyzes the acyloin condensation reaction between C atoms 2 and 3 of pyruvate and glyceraldehyde 3-phosphate to yield 1-deoxy-D-xylulose-5-phosphate (DXP). The polypeptide is 1-deoxy-D-xylulose-5-phosphate synthase (Crocosphaera subtropica (strain ATCC 51142 / BH68) (Cyanothece sp. (strain ATCC 51142))).